Consider the following 264-residue polypeptide: Diphthine synthase (264 aa).

Residues L10, D87, V90, S115 to I116, L166, A209, and H234 contribute to the S-adenosyl-L-methionine site.

This sequence belongs to the diphthine synthase family. Homodimer.

It catalyses the reaction 2-[(3S)-amino-3-carboxypropyl]-L-histidyl-[translation elongation factor 2] + 3 S-adenosyl-L-methionine = diphthine-[translation elongation factor 2] + 3 S-adenosyl-L-homocysteine + 3 H(+). It functions in the pathway protein modification; peptidyl-diphthamide biosynthesis. In terms of biological role, S-adenosyl-L-methionine-dependent methyltransferase that catalyzes the trimethylation of the amino group of the modified target histidine residue in translation elongation factor 2 (EF-2), to form an intermediate called diphthine. The three successive methylation reactions represent the second step of diphthamide biosynthesis. The sequence is that of Diphthine synthase from Thermococcus kodakarensis (strain ATCC BAA-918 / JCM 12380 / KOD1) (Pyrococcus kodakaraensis (strain KOD1)).